The following is a 64-amino-acid chain: Large ribosomal subunit protein uL30 (64 aa).

In terms of assembly, part of the 50S ribosomal subunit. Post-translationally, the protein is methylated on either Ala-2 or Lys-3.

The sequence is that of Large ribosomal subunit protein uL30 from Rhodopseudomonas palustris (strain ATCC BAA-98 / CGA009).